The following is a 345-amino-acid chain: Phosphoribosylformylglycinamidine cyclo-ligase (345 aa).

It belongs to the AIR synthase family.

Its subcellular location is the cytoplasm. The enzyme catalyses 2-formamido-N(1)-(5-O-phospho-beta-D-ribosyl)acetamidine + ATP = 5-amino-1-(5-phospho-beta-D-ribosyl)imidazole + ADP + phosphate + H(+). Its pathway is purine metabolism; IMP biosynthesis via de novo pathway; 5-amino-1-(5-phospho-D-ribosyl)imidazole from N(2)-formyl-N(1)-(5-phospho-D-ribosyl)glycinamide: step 2/2. This Shewanella baltica (strain OS185) protein is Phosphoribosylformylglycinamidine cyclo-ligase.